Here is a 218-residue protein sequence, read N- to C-terminus: RNA polymerase sigma-H factor (218 aa).

Residues 62–75 (DIVQEGMIGLYKSI) carry the Polymerase core binding motif. The segment at residues 182 to 201 (YQEISDELNRHVKSIDNALQ) is a DNA-binding region (H-T-H motif).

The protein belongs to the sigma-70 factor family. In terms of assembly, interacts transiently with the RNAP core.

Functionally, sigma factors are initiation factors that promote the attachment of RNA polymerase (RNAP) to specific initiation sites and are then released. This sigma factor is involved in the transition to post-exponential phase in the beginning of sporulation. It is also required for transcription of several stationary phase genes. Association with the RNAP core increases rapidly in early exponential phase, and reamins constant expression level after. The protein is RNA polymerase sigma-H factor (sigH) of Bacillus subtilis (strain 168).